We begin with the raw amino-acid sequence, 400 residues long: Large envelope protein (400 aa).

An N-acetylmethionine modification is found at methionine 1. 2 disordered regions span residues 1–42 (MGGY…NNPD) and 84–118 (ILTTVPATPPPASTNRQSGRQPTPISPPLRDSHPQ). The N-myristoyl glycine; by host moiety is linked to residue glycine 2. Residues 2–119 (GGYSSKPRKG…PPLRDSHPQA (118 aa)) form a pre-S1 region. Positions 2–174 (GGYSSKPRKG…FSRTGDPVPK (173 aa)) are pre-S. The Virion surface; in external conformation segment spans residues 2 to 181 (GGYSSKPRKG…VPKMENTTSG (180 aa)). At 2-253 (GGYSSKPRKG…PGYRWMCLRR (252 aa)) the chain is on the intravirion; in internal conformation side. N-linked (GlcNAc...) asparagine glycosylation is present at tyrosine 4. Residues 120-174 (MQWNSTTFHQALLDPRVRGLYFPAGGSSSGTANPVPTTASPISSIFSRTGDPVPK) form a pre-S2 region. A helical transmembrane segment spans residues 182–202 (FLGPLLVLQAGFFLLTRILTI). Residues 203–253 (PQSLDSWWTSLNFLGGAPACPGQNSQSPTSNHSPTSCPPICPGYRWMCLRR) are Intravirion; in external conformation-facing. The chain crosses the membrane as a helical span at residues 254-274 (FIIFLFILLLCLIFLLVLLDY). The Virion surface segment spans residues 275–348 (QGMLPVCPLI…WASVRFSWLS (74 aa)). A glycan (N-linked (GlcNAc...) asparagine; by host) is linked at asparagine 320. Residues 349-369 (LLAPFVQWFVGLSPTVWLSVI) traverse the membrane as a helical segment. Residues 370-375 (WMMWYW) are Intravirion-facing. A helical transmembrane segment spans residues 376 to 398 (GPSLYNILSPFLPLLPIFFCLWV). Over 399-400 (YI) the chain is Virion surface.

The protein belongs to the orthohepadnavirus major surface antigen family. As to quaternary structure, in its internal form (Li-HBsAg), interacts with the capsid protein and with the isoform S. Interacts with host chaperone CANX. Associates with host chaperone CANX through its pre-S2 N glycan; this association may be essential for isoform M proper secretion. In terms of assembly, interacts with isoform L. Interacts with the antigens of satellite virus HDV (HDVAgs); this interaction is required for encapsidation of HDV genomic RNA. In terms of processing, isoform M is N-terminally acetylated by host at a ratio of 90%, and N-glycosylated by host at the pre-S2 region. Post-translationally, myristoylated.

Its subcellular location is the virion membrane. Functionally, the large envelope protein exists in two topological conformations, one which is termed 'external' or Le-HBsAg and the other 'internal' or Li-HBsAg. In its external conformation the protein attaches the virus to cell receptors and thereby initiating infection. This interaction determines the species specificity and liver tropism. This attachment induces virion internalization predominantly through caveolin-mediated endocytosis. The large envelope protein also assures fusion between virion membrane and endosomal membrane. In its internal conformation the protein plays a role in virion morphogenesis and mediates the contact with the nucleocapsid like a matrix protein. Its function is as follows. The middle envelope protein plays an important role in the budding of the virion. It is involved in the induction of budding in a nucleocapsid independent way. In this process the majority of envelope proteins bud to form subviral lipoprotein particles of 22 nm of diameter that do not contain a nucleocapsid. This chain is Large envelope protein, found in Homo sapiens (Human).